The sequence spans 918 residues: Dual serine/threonine and tyrosine protein kinase (918 aa).

Basic and acidic residues predominate over residues 1–19 (MQKDGTRSSRRMEEGDRRN). A disordered region spans residues 1-29 (MQKDGTRSSRRMEEGDRRNGSTGSSGSVS). Residues 643–897 (PRIGRELGRG…PLMGIVQPML (255 aa)) enclose the Protein kinase domain. Residues 649-657 (LGRGQYGVV) and lysine 672 contribute to the ATP site. Catalysis depends on aspartate 768, which acts as the Proton acceptor.

Belongs to the protein kinase superfamily. Ser/Thr protein kinase family.

Its subcellular location is the cytoplasm. The protein resides in the cell membrane. It is found in the apical cell membrane. It localises to the basolateral cell membrane. The protein localises to the cell junction. The catalysed reaction is L-seryl-[protein] + ATP = O-phospho-L-seryl-[protein] + ADP + H(+). The enzyme catalyses L-threonyl-[protein] + ATP = O-phospho-L-threonyl-[protein] + ADP + H(+). It catalyses the reaction L-tyrosyl-[protein] + ATP = O-phospho-L-tyrosyl-[protein] + ADP + H(+). May act as a positive regulator of ERK phosphorylation downstream of fibroblast growth factor-receptor activation. May induce both caspase-dependent apoptosis and caspase-independent cell death. May play a role in the embryonic development. In Xenopus tropicalis (Western clawed frog), this protein is Dual serine/threonine and tyrosine protein kinase (dstyk).